Here is a 431-residue protein sequence, read N- to C-terminus: Beta-lactamase hydrolase-like protein (431 aa).

Positions 212, 214, and 286 each coordinate Zn(2+). A substrate-binding site is contributed by Asp309.

Belongs to the metallo-beta-lactamase superfamily. Zn(2+) is required as a cofactor.

Its function is as follows. Could play a role in cell adherence or biofilm development. The polypeptide is Beta-lactamase hydrolase-like protein (Xylella fastidiosa (strain Temecula1 / ATCC 700964)).